A 668-amino-acid chain; its full sequence is Trehalase (668 aa).

The segment at 1 to 23 (MVLQQTEPTDGADRKASDGPLTV) is disordered.

The protein belongs to the glycosyl hydrolase 15 family. In terms of assembly, homomultimer of 20 or more subunits. The cofactor is Mg(2+). It depends on phosphate as a cofactor.

The catalysed reaction is alpha,alpha-trehalose + H2O = alpha-D-glucose + beta-D-glucose. It functions in the pathway glycan degradation; trehalose degradation; D-glucose from alpha,alpha-trehalose: step 1/1. With respect to regulation, inhibited by pyrophosphate and polyphosphates. Also competitively inhibited by validoxylamine and castanospermine, but not by trehazolin. Catalyzes the hydrolysis of alpha,alpha-trehalose into two molecules of D-glucose. Does not hydrolyze maltose, isomaltose, sucrose, cellobiose, p-nitrophenyl-alpha-D-glucopyranoside, and methyl-alpha-D-glucopyranoside. Is also inactive on alpha,beta-trehalose, beta,beta-trehalose, alpha,alpha-trehalose-6,6'-dibehenate, trehalulose, nigerose, and trehalose dimycolate. The sequence is that of Trehalase from Mycolicibacterium smegmatis (strain ATCC 700084 / mc(2)155) (Mycobacterium smegmatis).